Here is a 153-residue protein sequence, read N- to C-terminus: Holo-[acyl-carrier-protein] synthase (153 aa).

Mg(2+) is bound by residues Asp-24 and Glu-78.

Belongs to the P-Pant transferase superfamily. AcpS family. Requires Mg(2+) as cofactor.

It is found in the cytoplasm. It catalyses the reaction apo-[ACP] + CoA = holo-[ACP] + adenosine 3',5'-bisphosphate + H(+). In terms of biological role, transfers the 4'-phosphopantetheine moiety from coenzyme A to a Ser of acyl-carrier-protein. The sequence is that of Holo-[acyl-carrier-protein] synthase from Bordetella pertussis (strain Tohama I / ATCC BAA-589 / NCTC 13251).